The following is a 510-amino-acid chain: Glycerol kinase (510 aa).

Thr-13 contributes to the ADP binding site. The ATP site is built by Thr-13 and Thr-14. Thr-13 is a sn-glycerol 3-phosphate binding site. Arg-17 serves as a coordination point for ADP. Residues Arg-83, Glu-84, Tyr-135, and Asp-255 each contribute to the sn-glycerol 3-phosphate site. Arg-83, Glu-84, Tyr-135, Asp-255, and Gln-256 together coordinate glycerol. ADP is bound by residues Thr-277, Gly-321, Gly-421, and Asn-425. ATP is bound by residues Thr-277, Gly-321, and Gly-421.

The protein belongs to the FGGY kinase family.

It carries out the reaction glycerol + ATP = sn-glycerol 3-phosphate + ADP + H(+). It functions in the pathway polyol metabolism; glycerol degradation via glycerol kinase pathway; sn-glycerol 3-phosphate from glycerol: step 1/1. In terms of biological role, key enzyme in the regulation of glycerol uptake and metabolism. Catalyzes the phosphorylation of glycerol to yield sn-glycerol 3-phosphate. This chain is Glycerol kinase, found in Haloarcula marismortui (strain ATCC 43049 / DSM 3752 / JCM 8966 / VKM B-1809) (Halobacterium marismortui).